The primary structure comprises 302 residues: Large ribosomal subunit protein bL28m (302 aa).

It belongs to the bacterial ribosomal protein bL28 family. Component of the mitochondrial ribosome large subunit (39S) which comprises a 16S rRNA and about 50 distinct proteins.

Its subcellular location is the mitochondrion. The chain is Large ribosomal subunit protein bL28m (mRpL28) from Drosophila melanogaster (Fruit fly).